A 519-amino-acid polypeptide reads, in one-letter code: Acetylcholine receptor subunit gamma (519 aa).

The first 22 residues, 1 to 22, serve as a signal peptide directing secretion; the sequence is MHGGQGPQLLLLLLATCLGAQS. The Extracellular portion of the chain corresponds to 23–240; sequence RNQEERLLAD…VVFYLLIQRK (218 aa). 2 N-linked (GlcNAc...) asparagine glycosylation sites follow: N52 and N163. A disulfide bridge links C150 with C164. 3 consecutive transmembrane segments (helical) span residues 241 to 265, 274 to 292, and 308 to 329; these read PLFYVINIIVPCVLISSVAILIYFL, CTVATNVLLAQTVFLFLVA, and YLTFLMVVTILIVVNSVVVLNV. The Cytoplasmic segment spans residues 330 to 476; that stretch reads SLRSPHTHSM…WLLVGRVLDR (147 aa). The helical transmembrane segment at 477–497 threads the bilayer; it reads VCFLAMLSLFICGTAGIFLMA.

This sequence belongs to the ligand-gated ion channel (TC 1.A.9) family. Acetylcholine receptor (TC 1.A.9.1) subfamily. Gamma/CHRNG sub-subfamily. Pentamer of two alpha chains, and one each of the beta, delta, and gamma (in immature muscle) or epsilon (in mature muscle) chains.

It localises to the postsynaptic cell membrane. It is found in the cell membrane. It carries out the reaction K(+)(in) = K(+)(out). The enzyme catalyses Na(+)(in) = Na(+)(out). In terms of biological role, after binding acetylcholine, the AChR responds by an extensive change in conformation that affects all subunits and leads to opening of an ion-conducting channel across the plasma membrane. The polypeptide is Acetylcholine receptor subunit gamma (Chrng) (Rattus norvegicus (Rat)).